Reading from the N-terminus, the 558-residue chain is Cytochrome c oxidase subunit 1-beta (558 aa).

Topologically, residues 1 to 28 are cytoplasmic; sequence MADAAVHGHGDHHDTRGFFTRWFMSTNH. Residues 29–59 traverse the membrane as a helical segment; the sequence is KDIGILYLFTAGIVGLISVCFTVYMRMELQH. The Periplasmic segment spans residues 60–82; the sequence is PGVQYMCLEGARLIADASAECTP. Cys-66 and Cys-80 are joined by a disulfide. Residues 83-120 traverse the membrane as a helical segment; sequence NGHLWNVMITYHGVLMMFFVVIPALFGGFGNYFMPLHI. Residue His-94 participates in Fe(II)-heme a binding. The Cytoplasmic segment spans residues 121 to 126; that stretch reads GAPDMA. Residues 127-151 traverse the membrane as a helical segment; it reads FPRLNNLSYWMYVCGVALGVASLLA. The Periplasmic segment spans residues 152–176; it reads PGGNDQMGSGVGWVLYPPLSTTEAG. The helical transmembrane segment at 177-206 threads the bilayer; sequence YSMDLAIFAVHVSGASSILGAINIITTFLN. The Cytoplasmic segment spans residues 207 to 217; sequence MRAPGMTLFKV. The helical transmembrane segment at 218–251 threads the bilayer; sequence PLFAWSVFITAWLILLSLPVLAGAITMLLMDRNF. Residues 252-262 are Periplasmic-facing; that stretch reads GTQFFDPAGGG. A helical transmembrane segment spans residues 263–299; the sequence is DPVLYQHILWFFGHPEVYIIILPGFGIISHVISTFAK. 2 residues coordinate Cu cation: His-276 and Tyr-280. Positions 276 to 280 form a cross-link, 1'-histidyl-3'-tyrosine (His-Tyr); sequence HPEVY. The Cytoplasmic portion of the chain corresponds to 300–303; that stretch reads KPIF. A helical membrane pass occupies residues 304-331; the sequence is GYLPMVLAMAAIGILGFVVWAHHMYTAG. Cu cation is bound by residues His-325 and His-326. Position 332 (Met-332) is a topological domain, periplasmic. A helical membrane pass occupies residues 333–364; it reads SLTQQAYFMLATMTIAVPTGIKVFSWIATMWG. Topologically, residues 365 to 369 are cytoplasmic; it reads GSIEF. Residues 370-395 traverse the membrane as a helical segment; sequence KTPMLWAFGFLFLFTVGGVTGVVLSQ. Topologically, residues 396–404 are periplasmic; it reads APLDRVYHD. Residues 405-437 traverse the membrane as a helical segment; the sequence is TYYVVAHFHYVMSLGAVFGIFAGVYYWIGKMSG. His-411 contacts heme a3. His-413 contributes to the Fe(II)-heme a binding site. Residues 438-440 are Cytoplasmic-facing; sequence RQY. A helical transmembrane segment spans residues 441-469; it reads PEWAGQLHFWMMFIGSNLIFFPQHFLGRQ. Over 470 to 478 the chain is Periplasmic; sequence GMPRRYIDY. The helical transmembrane segment at 479 to 514 threads the bilayer; sequence PVEFAYWNNISSIGAYISFASFLFFIGIVFYTLFAG. The Cytoplasmic segment spans residues 515-558; that stretch reads KRVNVPNYWNEHADTLEWTLPSPPPEHTFETLPKREDWDRAHAH.

It belongs to the heme-copper respiratory oxidase family. Cu(2+) serves as cofactor. Requires heme as cofactor. In terms of processing, his-276 and Tyr-280 are involved in the formation of a copper-coordinated covalent cross-link at the active site of the catalytic subunit I.

It is found in the cell inner membrane. It catalyses the reaction 4 Fe(II)-[cytochrome c] + O2 + 8 H(+)(in) = 4 Fe(III)-[cytochrome c] + 2 H2O + 4 H(+)(out). It participates in energy metabolism; oxidative phosphorylation. Its function is as follows. Subunit I and II form the functional core of the enzyme complex. Electrons originating in cytochrome c are transferred via heme a and Cu(A) to the binuclear center formed by heme a3 and Cu(B). This cytochrome c oxidase shows proton pump activity across the membrane in addition to the electron transfer. This chain is Cytochrome c oxidase subunit 1-beta (ctaDII), found in Paracoccus denitrificans.